A 123-amino-acid polypeptide reads, in one-letter code: Large ribosomal subunit protein bL12 (123 aa).

Belongs to the bacterial ribosomal protein bL12 family. Homodimer. Part of the ribosomal stalk of the 50S ribosomal subunit. Forms a multimeric L10(L12)X complex, where L10 forms an elongated spine to which 2 to 4 L12 dimers bind in a sequential fashion. Binds GTP-bound translation factors.

Functionally, forms part of the ribosomal stalk which helps the ribosome interact with GTP-bound translation factors. Is thus essential for accurate translation. In Geobacillus kaustophilus (strain HTA426), this protein is Large ribosomal subunit protein bL12.